The sequence spans 122 residues: Large ribosomal subunit protein uL14 (122 aa).

It belongs to the universal ribosomal protein uL14 family. As to quaternary structure, part of the 50S ribosomal subunit. Forms a cluster with proteins L3 and L19. In the 70S ribosome, L14 and L19 interact and together make contacts with the 16S rRNA in bridges B5 and B8.

In terms of biological role, binds to 23S rRNA. Forms part of two intersubunit bridges in the 70S ribosome. The protein is Large ribosomal subunit protein uL14 of Salinispora tropica (strain ATCC BAA-916 / DSM 44818 / JCM 13857 / NBRC 105044 / CNB-440).